A 210-amino-acid chain; its full sequence is Transmembrane protein 61 (210 aa).

2 helical membrane-spanning segments follow: residues 18-38 (YCMTVSGTVVLVAGTLCFAWW) and 69-89 (VSFVCCGAGGLLLLIGLLWSV). The segment at 140–172 (VAEGPPTPPAYPTEEALEPSGSRDALLSTQPAW) is disordered.

Its subcellular location is the membrane. The protein is Transmembrane protein 61 (TMEM61) of Homo sapiens (Human).